The chain runs to 229 residues: 2-C-methyl-D-erythritol 4-phosphate cytidylyltransferase (229 aa).

This sequence belongs to the IspD/TarI cytidylyltransferase family. IspD subfamily.

The catalysed reaction is 2-C-methyl-D-erythritol 4-phosphate + CTP + H(+) = 4-CDP-2-C-methyl-D-erythritol + diphosphate. It participates in isoprenoid biosynthesis; isopentenyl diphosphate biosynthesis via DXP pathway; isopentenyl diphosphate from 1-deoxy-D-xylulose 5-phosphate: step 2/6. Catalyzes the formation of 4-diphosphocytidyl-2-C-methyl-D-erythritol from CTP and 2-C-methyl-D-erythritol 4-phosphate (MEP). The sequence is that of 2-C-methyl-D-erythritol 4-phosphate cytidylyltransferase from Shouchella clausii (strain KSM-K16) (Alkalihalobacillus clausii).